The primary structure comprises 1020 residues: Fanconi-associated nuclease 1 (1020 aa).

A compositionally biased stretch (basic and acidic residues) spans 1–11 (MPSQRKSPDQK). A disordered region spans residues 1 to 24 (MPSQRKSPDQKRPRRSLSTSKTAK). Residues 14–22 (RRSLSTSKT) carry the D-box motif. A UBZ4-type zinc finger spans residues 41-69 (KLACSTCHKMVPRYDLIRHLDESCANNGV). Zn(2+) is bound by residues Cys-44, Cys-47, His-59, and Cys-64. Residues 173–208 (KNEGLASQCPQTSPSTPGTSLTDNCPEMEDKDEVLN) form a disordered region. A compositionally biased stretch (polar residues) spans 180–195 (QCPQTSPSTPGTSLTD). A KEN box motif is present at residues 212 to 214 (KEN). Positions 224–242 (ENASEQKVKNNKITGDESQ) are enriched in basic and acidic residues. Disordered regions lie at residues 224–252 (ENAS…PALT) and 269–288 (LVSN…ESAR). Residues 269 to 278 (LVSNTKSSPG) are compositionally biased toward polar residues. Positions 673–737 (SSRAVEVLER…AIRCIREGLA (65 aa)) form a coiled coil. The Mn(2+) site is built by Glu-837, Asp-963, Glu-978, and Val-979. Residues 898-1010 (AESLRAWVGE…GADVEVCHVV (113 aa)) form the VRR-NUC domain.

Belongs to the FAN1 family. Interacts with FANCD2 (when monoubiquitinated). Interacts with FANCI, MLH1, MLH3 and PMS2. It depends on Mn(2+) as a cofactor. Requires Mg(2+) as cofactor. In terms of processing, ubiquitinated and degraded during mitotic exit by the APC/C-Cdh1 complex.

The protein localises to the nucleus. It carries out the reaction Hydrolytically removes 5'-nucleotides successively from the 3'-hydroxy termini of 3'-hydroxy-terminated oligonucleotides.. Functionally, nuclease required for the repair of DNA interstrand cross-links (ICL) recruited at sites of DNA damage by monoubiquitinated FANCD2. Specifically involved in repair of ICL-induced DNA breaks by being required for efficient homologous recombination, probably in the resolution of homologous recombination intermediates. Not involved in DNA double-strand breaks resection. Acts as a 5'-3' exonuclease that anchors at a cut end of DNA and cleaves DNA successively at every third nucleotide, allowing to excise an ICL from one strand through flanking incisions. Probably keeps excising with 3'-flap annealing until it reaches and unhooks the ICL. Acts at sites that have a 5'-terminal phosphate anchor at a nick or a 1- or 2-nucleotide flap and is augmented by a 3' flap. Also has endonuclease activity toward 5'-flaps. The sequence is that of Fanconi-associated nuclease 1 from Mus musculus (Mouse).